The primary structure comprises 283 residues: Shikimate kinase (283 aa).

An ATP-binding site is contributed by 86–96 (PIKSGLSSSSA).

Belongs to the GHMP kinase family. Archaeal shikimate kinase subfamily.

The protein localises to the cytoplasm. It carries out the reaction shikimate + ATP = 3-phosphoshikimate + ADP + H(+). It participates in metabolic intermediate biosynthesis; chorismate biosynthesis; chorismate from D-erythrose 4-phosphate and phosphoenolpyruvate: step 5/7. This chain is Shikimate kinase, found in Methanococcus maripaludis (strain C6 / ATCC BAA-1332).